A 640-amino-acid polypeptide reads, in one-letter code: 1-deoxy-D-xylulose-5-phosphate synthase (640 aa).

Thiamine diphosphate is bound by residues His79 and 120 to 122 (GHS). Asp151 is a Mg(2+) binding site. Thiamine diphosphate contacts are provided by residues 152–153 (GA), Asn180, Tyr287, and Glu369. Asn180 lines the Mg(2+) pocket.

The protein belongs to the transketolase family. DXPS subfamily. In terms of assembly, homodimer. It depends on Mg(2+) as a cofactor. Thiamine diphosphate is required as a cofactor.

It catalyses the reaction D-glyceraldehyde 3-phosphate + pyruvate + H(+) = 1-deoxy-D-xylulose 5-phosphate + CO2. The protein operates within metabolic intermediate biosynthesis; 1-deoxy-D-xylulose 5-phosphate biosynthesis; 1-deoxy-D-xylulose 5-phosphate from D-glyceraldehyde 3-phosphate and pyruvate: step 1/1. Its function is as follows. Catalyzes the acyloin condensation reaction between C atoms 2 and 3 of pyruvate and glyceraldehyde 3-phosphate to yield 1-deoxy-D-xylulose-5-phosphate (DXP). This chain is 1-deoxy-D-xylulose-5-phosphate synthase, found in Thioalkalivibrio sulfidiphilus (strain HL-EbGR7).